Reading from the N-terminus, the 189-residue chain is Myb-like protein T (189 aa).

Residues 121–172 (NWSPDEQKALMVEVSTLGNKSEINWFFISQQLFLKGISRNARECQRKHESIQ) enclose the Myb-like domain.

In Dictyostelium discoideum (Social amoeba), this protein is Myb-like protein T (mybT).